The primary structure comprises 365 residues: Pheromone M-factor receptor (365 aa).

The next 7 membrane-spanning stretches (helical) occupy residues 7–24, 31–54, 73–100, 116–133, 155–182, 204–226, and 265–283; these read FYQF…PILY, NIPC…ESAI, ITSR…DTVI, VCLS…MVPL, YTLL…VVLY, FLRL…IFMV, and VPPT…SGGW.

The protein belongs to the G-protein coupled receptor 4 family.

The protein localises to the membrane. Functionally, receptor for the peptide pheromone M-factor, a mating factor of S.pombe. Pheromone signaling is essential for initiation of meiosis in S.pombe; M-factor signaling alone may be sufficient. The protein is Pheromone M-factor receptor (map3) of Schizosaccharomyces pombe (strain 972 / ATCC 24843) (Fission yeast).